The primary structure comprises 61 residues: Large ribosomal subunit protein bL32 (61 aa).

Residues Met1–Arg16 show a composition bias toward basic residues. Residues Met1–Asp20 form a disordered region.

The protein belongs to the bacterial ribosomal protein bL32 family.

This chain is Large ribosomal subunit protein bL32, found in Pelobacter propionicus (strain DSM 2379 / NBRC 103807 / OttBd1).